We begin with the raw amino-acid sequence, 794 residues long: DNA ligase (794 aa).

A disordered region spans residues 1 to 47; that stretch reads MEEDLFSLAAGKQPSQQATNETAPRAGEARENAGTDHPGNAEDPAHR. Residues 13 to 22 show a composition bias toward polar residues; sequence QPSQQATNET. A compositionally biased stretch (basic and acidic residues) spans 27–47; the sequence is GEARENAGTDHPGNAEDPAHR. NAD(+) is bound by residues 73–77, 122–123, and Glu-160; these read DAEYD and SI. Lys-162 serves as the catalytic N6-AMP-lysine intermediate. Positions 183, 219, 335, and 359 each coordinate NAD(+). The Zn(2+) site is built by Cys-457, Cys-460, Cys-475, and Cys-480. Residues 717 to 794 enclose the BRCT domain; the sequence is IPAGSLSGKT…EEDFYKMIGN (78 aa).

This sequence belongs to the NAD-dependent DNA ligase family. LigA subfamily. Mg(2+) is required as a cofactor. The cofactor is Mn(2+).

The enzyme catalyses NAD(+) + (deoxyribonucleotide)n-3'-hydroxyl + 5'-phospho-(deoxyribonucleotide)m = (deoxyribonucleotide)n+m + AMP + beta-nicotinamide D-nucleotide.. Its function is as follows. DNA ligase that catalyzes the formation of phosphodiester linkages between 5'-phosphoryl and 3'-hydroxyl groups in double-stranded DNA using NAD as a coenzyme and as the energy source for the reaction. It is essential for DNA replication and repair of damaged DNA. The protein is DNA ligase of Akkermansia muciniphila (strain ATCC BAA-835 / DSM 22959 / JCM 33894 / BCRC 81048 / CCUG 64013 / CIP 107961 / Muc).